Here is a 442-residue protein sequence, read N- to C-terminus: Transcription factor AP-2-epsilon (442 aa).

The short motif at 54-59 is the PPxY motif element; it reads YFPPPY. Phosphoserine; by PKA is present on serine 246. Positions 287–417 are H-S-H (helix-span-helix), dimerization; the sequence is RRKAANVTLL…YLLESLKGLD (131 aa).

This sequence belongs to the AP-2 family. In terms of assembly, binds DNA as a dimer. Can form homodimers or heterodimers with other AP-2 family members. As to expression, expressed in skin, primary keratinocytes, immortalized keratinocytes, and HeLa cell line.

Its subcellular location is the nucleus. Sequence-specific DNA-binding protein that interacts with inducible viral and cellular enhancer elements to regulate transcription of selected genes. AP-2 factors bind to the consensus sequence 5'-GCCNNNGGC-3' and activate genes involved in a large spectrum of important biological functions including proper eye, face, body wall, limb and neural tube development. They also suppress a number of genes including MCAM/MUC18, C/EBP alpha and MYC. AP-2-epsilon may play a role in the development of the CNS and in cartilage differentiation. This chain is Transcription factor AP-2-epsilon, found in Homo sapiens (Human).